The primary structure comprises 82 residues: DNA-directed RNA polymerase subunit Rpo5 (82 aa).

This sequence belongs to the archaeal Rpo5/eukaryotic RPB5 RNA polymerase subunit family. As to quaternary structure, part of the RNA polymerase complex.

It localises to the cytoplasm. It catalyses the reaction RNA(n) + a ribonucleoside 5'-triphosphate = RNA(n+1) + diphosphate. Its function is as follows. DNA-dependent RNA polymerase (RNAP) catalyzes the transcription of DNA into RNA using the four ribonucleoside triphosphates as substrates. In Thermococcus onnurineus (strain NA1), this protein is DNA-directed RNA polymerase subunit Rpo5.